A 262-amino-acid polypeptide reads, in one-letter code: uncharacterized protein (262 aa).

Residues 1-22 (MGYLKRFALYISVMILIFAIAG) form the signal peptide. A lipid anchor (N-palmitoyl cysteine) is attached at cysteine 23. Cysteine 23 carries the S-diacylglycerol cysteine lipid modification.

It belongs to the staphylococcal tandem lipoprotein family.

Its subcellular location is the cell membrane. This is an uncharacterized protein from Staphylococcus aureus (strain NCTC 8325 / PS 47).